We begin with the raw amino-acid sequence, 462 residues long: ATP synthase subunit beta (462 aa).

152–159 (GGAGVGKT) contacts ATP.

Belongs to the ATPase alpha/beta chains family. As to quaternary structure, F-type ATPases have 2 components, CF(1) - the catalytic core - and CF(0) - the membrane proton channel. CF(1) has five subunits: alpha(3), beta(3), gamma(1), delta(1), epsilon(1). CF(0) has three main subunits: a(1), b(2) and c(9-12). The alpha and beta chains form an alternating ring which encloses part of the gamma chain. CF(1) is attached to CF(0) by a central stalk formed by the gamma and epsilon chains, while a peripheral stalk is formed by the delta and b chains.

It is found in the cell inner membrane. The catalysed reaction is ATP + H2O + 4 H(+)(in) = ADP + phosphate + 5 H(+)(out). Functionally, produces ATP from ADP in the presence of a proton gradient across the membrane. The catalytic sites are hosted primarily by the beta subunits. The polypeptide is ATP synthase subunit beta (Aeromonas hydrophila subsp. hydrophila (strain ATCC 7966 / DSM 30187 / BCRC 13018 / CCUG 14551 / JCM 1027 / KCTC 2358 / NCIMB 9240 / NCTC 8049)).